The chain runs to 216 residues: MEEEKNWIAVPTWRIPCRLERWHSLIKYLKYRTKDLQQVSYVPHHKVGWAWWTCSRVIFPLKEGAHLEVQGYWNLTPERGFLSSYAVRLTWYERSFYTDVTPDVADRLLHGSYFSSFTANEVRRAIRGEKILSHCNYPSAHTGQVPSLQFLALRVVQEGKDGSQGESTTRKQRRRNSRRGIRMARDNIRTSQQSSSQSLAQGTYFPGLAEVLGILA.

At Thr-98 the chain carries Phosphothreonine; by host MAP4K1. The HCCH motif signature appears at 110–141; the sequence is HGSYFSSFTANEVRRAIRGEKILSHCNYPSAH. Ser-147 carries the post-translational modification Phosphoserine; by host. The BC-box-like motif motif lies at 147–156; the sequence is SLQFLALRVV. The segment at 154–168 is multimerization; that stretch reads RVVQEGKDGSQGEST. The segment at 159-181 is disordered; that stretch reads GKDGSQGESTTRKQRRRNSRRGI. Basic residues predominate over residues 170–181; that stretch reads RKQRRRNSRRGI.

It belongs to the primate lentivirus group Vif protein family. As to quaternary structure, homomultimer; in vitro and presumably in vivo. Interacts with viral Pr55Gag precursor and human APOBEC3G. The interaction between Vif and APOBEC3G is species-specific, which may play a role in restricting the replication of HIV to humans. Forms an E3 ligase complex by interacting with human CUL5 and elongin BC complex (ELOB and ELOC). Post-translationally, highly phosphorylated on serine and threonine residues. In terms of processing, polyubiquitinated and degraded by the proteasome in the presence of APOBEC3G.

It localises to the host cytoplasm. Its subcellular location is the host cell membrane. It is found in the virion. Functionally, counteracts the innate antiviral activity of APOBEC3G. Forms a complex with host APOBEC3G thus preventing the entry of this lethally hypermutating enzyme into progeny virions. Functions as an adapter molecule, recruiting APOBEC3G to the ubiquitin-proteasome machinery. Targets APOBEC3G for degradation through the assembly with elongin BC complex, CUL5 and RBX1. Binds viral RNA and affects the stability of viral nucleoprotein core. May play a role in viral morphology. The polypeptide is Virion infectivity factor (vif) (Human immunodeficiency virus type 2 subtype B (isolate EHO) (HIV-2)).